The primary structure comprises 459 residues: Argininosuccinate lyase (459 aa).

It belongs to the lyase 1 family. Argininosuccinate lyase subfamily.

The protein localises to the cytoplasm. It carries out the reaction 2-(N(omega)-L-arginino)succinate = fumarate + L-arginine. It participates in amino-acid biosynthesis; L-arginine biosynthesis; L-arginine from L-ornithine and carbamoyl phosphate: step 3/3. In Geobacillus kaustophilus (strain HTA426), this protein is Argininosuccinate lyase.